Consider the following 496-residue polypeptide: L-arabinose isomerase (496 aa).

Glutamate 302, glutamate 329, histidine 346, and histidine 445 together coordinate Mn(2+).

It belongs to the arabinose isomerase family. It depends on Mn(2+) as a cofactor.

It carries out the reaction beta-L-arabinopyranose = L-ribulose. Its pathway is carbohydrate degradation; L-arabinose degradation via L-ribulose; D-xylulose 5-phosphate from L-arabinose (bacterial route): step 1/3. Its function is as follows. Catalyzes the conversion of L-arabinose to L-ribulose. The polypeptide is L-arabinose isomerase (Thermotoga maritima (strain ATCC 43589 / DSM 3109 / JCM 10099 / NBRC 100826 / MSB8)).